A 363-amino-acid polypeptide reads, in one-letter code: Galactokinase (363 aa).

Residue 16–19 coordinates substrate; sequence EHTD. ATP-binding positions include Ser-50 and 103–109; that span reads GSGLSSS. Mg(2+)-binding residues include Ser-109 and Glu-141. Asp-153 acts as the Proton acceptor in catalysis. Position 205 (Tyr-205) interacts with substrate.

It belongs to the GHMP kinase family. GalK subfamily.

The protein localises to the cytoplasm. It catalyses the reaction alpha-D-galactose + ATP = alpha-D-galactose 1-phosphate + ADP + H(+). The protein operates within carbohydrate metabolism; galactose metabolism. Functionally, catalyzes the transfer of the gamma-phosphate of ATP to D-galactose to form alpha-D-galactose-1-phosphate (Gal-1-P). The chain is Galactokinase from Mycobacterium tuberculosis (strain ATCC 25177 / H37Ra).